Reading from the N-terminus, the 161-residue chain is Putative pre-16S rRNA nuclease (161 aa).

It belongs to the YqgF nuclease family.

Its subcellular location is the cytoplasm. Functionally, could be a nuclease involved in processing of the 5'-end of pre-16S rRNA. The polypeptide is Putative pre-16S rRNA nuclease (Methylocella silvestris (strain DSM 15510 / CIP 108128 / LMG 27833 / NCIMB 13906 / BL2)).